Here is a 193-residue protein sequence, read N- to C-terminus: Signal peptidase I T (193 aa).

Residues 1-25 (MTEEKNTNTEKTAKKKTNTYLEWGK) are Cytoplasmic-facing. The chain crosses the membrane as a helical span at residues 26-42 (AIVIAVLLALLIRHFLF). The Extracellular portion of the chain corresponds to 43 to 193 (EPYLVEGSSM…FPFNEMRQTK (151 aa)). Catalysis depends on residues Ser-51 and Lys-93.

Belongs to the peptidase S26 family.

The protein resides in the cell membrane. The catalysed reaction is Cleavage of hydrophobic, N-terminal signal or leader sequences from secreted and periplasmic proteins.. The sequence is that of Signal peptidase I T (sipT) from Bacillus subtilis (strain 168).